A 430-amino-acid chain; its full sequence is Histidine--tRNA ligase (430 aa).

This sequence belongs to the class-II aminoacyl-tRNA synthetase family. In terms of assembly, homodimer.

It is found in the cytoplasm. The catalysed reaction is tRNA(His) + L-histidine + ATP = L-histidyl-tRNA(His) + AMP + diphosphate + H(+). This Acinetobacter baumannii (strain AB307-0294) protein is Histidine--tRNA ligase.